A 335-amino-acid chain; its full sequence is Fructose-1,6-bisphosphatase class 1 (335 aa).

Mg(2+) is bound by residues E90, D113, L115, and D116. Substrate is bound by residues 116–119 (DGSS), N209, Y242, and K272. E278 contributes to the Mg(2+) binding site.

Belongs to the FBPase class 1 family. Homotetramer. Requires Mg(2+) as cofactor.

It localises to the cytoplasm. It catalyses the reaction beta-D-fructose 1,6-bisphosphate + H2O = beta-D-fructose 6-phosphate + phosphate. Its pathway is carbohydrate biosynthesis; gluconeogenesis. The sequence is that of Fructose-1,6-bisphosphatase class 1 from Mannheimia succiniciproducens (strain KCTC 0769BP / MBEL55E).